The following is a 422-amino-acid chain: Telomerase-associated protein of 50 kDa (422 aa).

As to quaternary structure, component of the telomerase holoenzyme complex, composed of the catalytic core (the catalytic subunit TERT, the telomerase RNA template component TER and TAP65/p65), which is associated with two heterotrimeric subcomplexes: (i) the replication protein A (RPA)-related subcomplex, composed of TEB1, RPA2/TEB2 and RPA3/TEB3 and (ii) the CST-like subcomplex, composed of TAP75/p75, TAP45/p45 and TAP19/p19. TEB1 and the CST-like subcomplex are tethered to the catalytic core by TAP50/p50.

Its subcellular location is the chromosome. The protein localises to the telomere. Tethering component of the holoenzyme telomerase ribonucleoprotein (RNP) complex. Telomerase is an essential ribonucleoprotein enzyme that copies new telomeric repeats onto chromosome ends by repetitively synthesizing the short telomere-repeat sequence 5'-TTGGGG-3' using an RNA template component TER. In the telomerase holoenzyme complex, acts as a hub that anchors the two heterotrimeric subcomplexes with the catalytic core. This chain is Telomerase-associated protein of 50 kDa, found in Tetrahymena thermophila (strain SB210).